Consider the following 131-residue polypeptide: Large ribosomal subunit protein bL12c (131 aa).

Residues 107 to 131 (QGVSKDDAEASKKQLEDAGAKVKIS) form a disordered region. Residues 110-131 (SKDDAEASKKQLEDAGAKVKIS) are compositionally biased toward basic and acidic residues.

This sequence belongs to the bacterial ribosomal protein bL12 family. As to quaternary structure, homodimer. Part of the ribosomal stalk of the 50S ribosomal subunit. Forms a multimeric L10(L12)X complex, where L10 forms an elongated spine to which 2 to 4 L12 dimers bind in a sequential fashion. Binds GTP-bound translation factors.

It is found in the plastid. The protein resides in the chloroplast. Forms part of the ribosomal stalk which helps the ribosome interact with GTP-bound translation factors. Is thus essential for accurate translation. The chain is Large ribosomal subunit protein bL12c from Chlorella vulgaris (Green alga).